The following is a 236-amino-acid chain: Small ribosomal subunit protein uS3 (236 aa).

The 69-residue stretch at 39–107 (IREFLTEELK…DTSLNIVEVR (69 aa)) folds into the KH type-2 domain. Residues 214 to 236 (ASERRAVEGDNQGSSSNRRRENA) form a disordered region.

It belongs to the universal ribosomal protein uS3 family. Part of the 30S ribosomal subunit. Forms a tight complex with proteins S10 and S14.

Its function is as follows. Binds the lower part of the 30S subunit head. Binds mRNA in the 70S ribosome, positioning it for translation. In Brucella abortus (strain S19), this protein is Small ribosomal subunit protein uS3.